Reading from the N-terminus, the 101-residue chain is Urease subunit beta (101 aa).

Belongs to the urease beta subunit family. As to quaternary structure, heterotrimer of UreA (gamma), UreB (beta) and UreC (alpha) subunits. Three heterotrimers associate to form the active enzyme.

The protein resides in the cytoplasm. The catalysed reaction is urea + 2 H2O + H(+) = hydrogencarbonate + 2 NH4(+). The protein operates within nitrogen metabolism; urea degradation; CO(2) and NH(3) from urea (urease route): step 1/1. This Burkholderia multivorans (strain ATCC 17616 / 249) protein is Urease subunit beta.